We begin with the raw amino-acid sequence, 71 residues long: Translation initiation factor IF-1 (71 aa).

An S1-like domain is found at 1-71; that stretch reads MANDVIEIEG…TKGRITYRFR (71 aa).

This sequence belongs to the IF-1 family. In terms of assembly, component of the 30S ribosomal translation pre-initiation complex which assembles on the 30S ribosome in the order IF-2 and IF-3, IF-1 and N-formylmethionyl-tRNA(fMet); mRNA recruitment can occur at any time during PIC assembly.

Its subcellular location is the cytoplasm. One of the essential components for the initiation of protein synthesis. Stabilizes the binding of IF-2 and IF-3 on the 30S subunit to which N-formylmethionyl-tRNA(fMet) subsequently binds. Helps modulate mRNA selection, yielding the 30S pre-initiation complex (PIC). Upon addition of the 50S ribosomal subunit IF-1, IF-2 and IF-3 are released leaving the mature 70S translation initiation complex. The sequence is that of Translation initiation factor IF-1 from Leuconostoc mesenteroides subsp. mesenteroides (strain ATCC 8293 / DSM 20343 / BCRC 11652 / CCM 1803 / JCM 6124 / NCDO 523 / NBRC 100496 / NCIMB 8023 / NCTC 12954 / NRRL B-1118 / 37Y).